Reading from the N-terminus, the 198-residue chain is GTP cyclohydrolase-2 (198 aa).

52-56 (RMHSE) contacts GTP. Zn(2+) contacts are provided by C57, C68, and C70. Residues Q73, 94-96 (EGR), and T116 each bind GTP. D128 (proton acceptor) is an active-site residue. Catalysis depends on R130, which acts as the Nucleophile. The GTP site is built by T151 and K156.

The protein belongs to the GTP cyclohydrolase II family. Zn(2+) serves as cofactor.

It carries out the reaction GTP + 4 H2O = 2,5-diamino-6-hydroxy-4-(5-phosphoribosylamino)-pyrimidine + formate + 2 phosphate + 3 H(+). It functions in the pathway cofactor biosynthesis; riboflavin biosynthesis; 5-amino-6-(D-ribitylamino)uracil from GTP: step 1/4. Functionally, catalyzes the conversion of GTP to 2,5-diamino-6-ribosylamino-4(3H)-pyrimidinone 5'-phosphate (DARP), formate and pyrophosphate. The chain is GTP cyclohydrolase-2 from Vibrio parahaemolyticus serotype O3:K6 (strain RIMD 2210633).